The chain runs to 381 residues: Arrestin-C (381 aa).

It belongs to the arrestin family. As to quaternary structure, homodimer; disulfide-linked in response to retinal illumination. Interacts with CXCR4; the interaction is dependent on the C-terminal phosphorylation of CXCR4 and modulates the calcium ion mobilization activity of CXCR4. Interacts with GPR84. As to expression, inner and outer segments, and the inner plexiform regions of the retina.

The protein resides in the photoreceptor inner segment. The protein localises to the cell projection. Its subcellular location is the cilium. It localises to the photoreceptor outer segment. Functionally, may play a role in an as yet undefined retina-specific signal transduction. Could bind to photoactivated-phosphorylated red/green opsins. The polypeptide is Arrestin-C (Arr3) (Mus musculus (Mouse)).